The following is a 598-amino-acid chain: MSVKNIRNFSIIAHIDHGKSTLADRIISECGAISDRQMSSQVMDTMDIEKERGITIKAQSVRLNYKFNNENFVLNLIDTPGHVDFSYEVSRSLASCEGALLVVDASQGVEAQTIANVYIALENNLEIIPVINKIDLPNADVEKVKHEIEHIIGIDCKDAICVSAKTGVGIKELIETIITKIPAPKTDDEAPTKALIYDSWFDNYLGALALVRIYEGSIAKNDEVLVMSTDKKHIVQDLFYPHPLSPIKTQSLQSGEVGVVVLGLKTVGDVQVGDTITLVKNKAKEAIGGFEKAKAFVFAGLYPIETDKFEDLRDALDKLKLNDSSITYEPETSLALGFGFRVGFLGLLHMEVIKERLEREFNLDLIATAPTVTYEIYQTDGELIKIQNPSELPPVNKIDHIKEPYVKATIITPSEFLGNLITLLNRKRGVQVKMDYITPERVLLEYDVPLNEIVMDFYDKLKSLTKGYASFDYEPIEFRVGDLVKLDIKVAGENVDALSIIVPNEKAQSKGRELVSAMKEIVPRQLFEVAIQASIGNKIIARETVKSMGKNVTAKCYGGDITRKRKLLEKQKEGKKRMKAIGKVNLPQEAFLSVLKID.

The region spanning 4–185 (KNIRNFSIIA…TIITKIPAPK (182 aa)) is the tr-type G domain. Residues 16–21 (DHGKST) and 132–135 (NKID) contribute to the GTP site.

Belongs to the TRAFAC class translation factor GTPase superfamily. Classic translation factor GTPase family. LepA subfamily.

It localises to the cell inner membrane. The catalysed reaction is GTP + H2O = GDP + phosphate + H(+). Required for accurate and efficient protein synthesis under certain stress conditions. May act as a fidelity factor of the translation reaction, by catalyzing a one-codon backward translocation of tRNAs on improperly translocated ribosomes. Back-translocation proceeds from a post-translocation (POST) complex to a pre-translocation (PRE) complex, thus giving elongation factor G a second chance to translocate the tRNAs correctly. Binds to ribosomes in a GTP-dependent manner. In Campylobacter jejuni subsp. jejuni serotype O:2 (strain ATCC 700819 / NCTC 11168), this protein is Elongation factor 4.